The chain runs to 333 residues: Quinolinate synthase (333 aa).

His41 and Ser58 together coordinate iminosuccinate. Cys103 serves as a coordination point for [4Fe-4S] cluster. Iminosuccinate contacts are provided by residues 129-131 and Ser146; that span reads YIN. Cys189 serves as a coordination point for [4Fe-4S] cluster. Residues 215 to 217 and Thr232 each bind iminosuccinate; that span reads HPE. Cys282 is a [4Fe-4S] cluster binding site.

Belongs to the quinolinate synthase family. Type 2 subfamily. [4Fe-4S] cluster is required as a cofactor.

It is found in the cytoplasm. The catalysed reaction is iminosuccinate + dihydroxyacetone phosphate = quinolinate + phosphate + 2 H2O + H(+). The protein operates within cofactor biosynthesis; NAD(+) biosynthesis; quinolinate from iminoaspartate: step 1/1. Catalyzes the condensation of iminoaspartate with dihydroxyacetone phosphate to form quinolinate. This is Quinolinate synthase from Prochlorococcus marinus (strain MIT 9303).